The chain runs to 120 residues: Flagellar protein FliT (120 aa).

The tract at residues M1–I50 is required for homodimerization. The fliD binding stretch occupies residues V60–N98.

The protein belongs to the FliT family. In terms of assembly, homodimer. Interacts with FliD and FlhC.

It localises to the cytoplasm. The protein resides in the cytosol. Dual-function protein that regulates the transcription of class 2 flagellar operons and that also acts as an export chaperone for the filament-capping protein FliD. As a transcriptional regulator, acts as an anti-FlhDC factor; it directly binds FlhC, thus inhibiting the binding of the FlhC/FlhD complex to class 2 promoters, resulting in decreased expression of class 2 flagellar operons. As a chaperone, effects FliD transition to the membrane by preventing its premature polymerization, and by directing it to the export apparatus. In Dickeya chrysanthemi (Pectobacterium chrysanthemi), this protein is Flagellar protein FliT.